Reading from the N-terminus, the 509-residue chain is MRKPTALIILDGFGLREETYGNAVAQAKKPNFDGYWNKFPHTTLTACGEAVGLPEGQMGNSEVGHLNIGAGRIVYQSLTRVNVAIREGEFDKNETFQSAIKSVKEKGTALHLFGLLSDGGVHSHMNHMFALLRLAAKEGVEKVYIHAFLDGRDVGPKTAQSYIDATNEVIKETGVGQFATISGRYYSMDRDKRWDRVEKCYRAMVNGEGPTYKSAEECVEDSYANGIYDEFVLPSVIVNEDNTPVATINDDDAVIFYNFRPDRAIQIARVFTNEDFREFDRGEKVPHIPEFVCMTHFSETVDGYVAFKPMNLDNTLGEVVAQAGLKQLRIAETEKYPHVTFFFSGGREAEFPGEERILINSPKVATYDLKPEMSIYEVTDALVNEIENDKHDVIILNFANCDMVGHSGMMEPTIKAVEATDECLGKVVEAILAKDGVALITADHGNADEELTSDGEPMTAHTTNPVPFIVTKNDVELREGGILGDIAPXMLTLLGVEQPKEMTGKTIIK.

A Mn(2+)-binding site is contributed by Asp-11. The residue at position 35 (Tyr-35) is a Phosphotyrosine. Ser-61 contributes to the Mn(2+) binding site. Ser-61 acts as the Phosphoserine intermediate in catalysis. Residues His-122, 152 to 153, Arg-184, Arg-190, 260 to 263, and Lys-335 each bind substrate; these read RD and RPDR. The Mn(2+) site is built by Asp-402, His-406, Asp-443, His-444, and His-461.

This sequence belongs to the BPG-independent phosphoglycerate mutase family. In terms of assembly, monomer. The cofactor is Mn(2+).

The enzyme catalyses (2R)-2-phosphoglycerate = (2R)-3-phosphoglycerate. The protein operates within carbohydrate degradation; glycolysis; pyruvate from D-glyceraldehyde 3-phosphate: step 3/5. Its function is as follows. Essential for rapid growth and for sporulation. Catalyzes the interconversion of 2-phosphoglycerate and 3-phosphoglycerate. This is 2,3-bisphosphoglycerate-independent phosphoglycerate mutase from Bacillus cereus (strain ATCC 10987 / NRS 248).